Here is a 311-residue protein sequence, read N- to C-terminus: Methionyl-tRNA formyltransferase (311 aa).

Residue 112 to 115 (SLLP) participates in (6S)-5,6,7,8-tetrahydrofolate binding.

It belongs to the Fmt family.

The catalysed reaction is L-methionyl-tRNA(fMet) + (6R)-10-formyltetrahydrofolate = N-formyl-L-methionyl-tRNA(fMet) + (6S)-5,6,7,8-tetrahydrofolate + H(+). Functionally, attaches a formyl group to the free amino group of methionyl-tRNA(fMet). The formyl group appears to play a dual role in the initiator identity of N-formylmethionyl-tRNA by promoting its recognition by IF2 and preventing the misappropriation of this tRNA by the elongation apparatus. This chain is Methionyl-tRNA formyltransferase, found in Bradyrhizobium diazoefficiens (strain JCM 10833 / BCRC 13528 / IAM 13628 / NBRC 14792 / USDA 110).